The sequence spans 168 residues: MLARMLNTTLSACFLSLLAFSSACYFQNCPRGGKRAISDMELRQCLPCGPGGKGRCFGPSICCADELGCFVGTAEALRCQEENYLPSPCQSGQKPCGSGGRCAAVGICCSDESCVAEPECHDGFFRLTRAREPSNATQLDGPARALLLRLVQLAGTRESVDSAKPRVY.

The first 23 residues, Met1–Ala23, serve as a signal peptide directing secretion. The cysteines at positions 24 and 29 are disulfide-linked. At Gly32 the chain carries Glycine amide. 7 cysteine pairs are disulfide-bonded: Cys45-Cys89, Cys48-Cys62, Cys56-Cys79, Cys63-Cys69, Cys96-Cys108, Cys102-Cys120, and Cys109-Cys114. Asn135 carries an N-linked (GlcNAc...) asparagine glycan.

This sequence belongs to the vasopressin/oxytocin family. As to quaternary structure, interacts with vasopressin receptors V1bR/AVPR1B (Ki=85 pM), V1aR/AVPR1A (Ki=0.6 nM) and V2R/AVPR2 (Ki=4.9 nM). Interacts with oxytocin receptor (OXTR) (Ki=110 nM).

The protein localises to the secreted. In terms of biological role, neurophysin 2 specifically binds vasopressin. Functionally, vasopressin has a direct antidiuretic action on the kidney, it also causes vasoconstriction of the peripheral vessels. Acts by binding to vasopressin receptors (V1bR/AVPR1B, V1aR/AVPR1A, and V2R/AVPR2). The chain is Vasopressin-neurophysin 2-copeptin (Avp) from Mus musculus (Mouse).